A 383-amino-acid chain; its full sequence is Chaperone protein DnaJ (383 aa).

The region spanning Asp5–Gly70 is the J domain. The CR-type zinc-finger motif lies at Gly139–Glu217. Zn(2+) contacts are provided by Cys152, Cys155, Cys169, Cys172, Cys191, Cys194, Cys205, and Cys208. CXXCXGXG motif repeat units lie at residues Cys152–Gly159, Cys169–Gly176, Cys191–Gly198, and Cys205–Gly212.

It belongs to the DnaJ family. As to quaternary structure, homodimer. It depends on Zn(2+) as a cofactor.

It is found in the cytoplasm. Participates actively in the response to hyperosmotic and heat shock by preventing the aggregation of stress-denatured proteins and by disaggregating proteins, also in an autonomous, DnaK-independent fashion. Unfolded proteins bind initially to DnaJ; upon interaction with the DnaJ-bound protein, DnaK hydrolyzes its bound ATP, resulting in the formation of a stable complex. GrpE releases ADP from DnaK; ATP binding to DnaK triggers the release of the substrate protein, thus completing the reaction cycle. Several rounds of ATP-dependent interactions between DnaJ, DnaK and GrpE are required for fully efficient folding. Also involved, together with DnaK and GrpE, in the DNA replication of plasmids through activation of initiation proteins. This is Chaperone protein DnaJ from Methylorubrum populi (strain ATCC BAA-705 / NCIMB 13946 / BJ001) (Methylobacterium populi).